A 231-amino-acid polypeptide reads, in one-letter code: MLEKVFDINQIFDEKGIMTLKRFGWDGSVAFQNHTDFSDELIDNAKKYGEENGILVYSGLKILSNNQNEIDKIVKKYRNRVEMIFIEGGDIKINRKTLESNETDVLSTPELNRADNGLDHVLTRLGSTNRVSIELNLSNLIKNKNYDRARVLWAFQRNLMLCKKYDTPVVISSGANDIYGIKAPDDVRGFLNTLVDQMYAKKIMETTSKIVNYRLHMKKSNVLMYGLEIVE.

This sequence belongs to the eukaryotic/archaeal RNase P protein component 3 family. Consists of a catalytic RNA component and at least 4-5 protein subunits.

The protein resides in the cytoplasm. The catalysed reaction is Endonucleolytic cleavage of RNA, removing 5'-extranucleotides from tRNA precursor.. Part of ribonuclease P, a protein complex that generates mature tRNA molecules by cleaving their 5'-ends. This is Ribonuclease P protein component 3 from Methanococcus vannielii (strain ATCC 35089 / DSM 1224 / JCM 13029 / OCM 148 / SB).